Reading from the N-terminus, the 436-residue chain is ATP-dependent protease ATPase subunit HslU (436 aa).

Residues V18, G60 to E65, D249, E314, and R386 contribute to the ATP site.

This sequence belongs to the ClpX chaperone family. HslU subfamily. In terms of assembly, a double ring-shaped homohexamer of HslV is capped on each side by a ring-shaped HslU homohexamer. The assembly of the HslU/HslV complex is dependent on binding of ATP.

The protein localises to the cytoplasm. Its function is as follows. ATPase subunit of a proteasome-like degradation complex; this subunit has chaperone activity. The binding of ATP and its subsequent hydrolysis by HslU are essential for unfolding of protein substrates subsequently hydrolyzed by HslV. HslU recognizes the N-terminal part of its protein substrates and unfolds these before they are guided to HslV for hydrolysis. This Rhizobium rhizogenes (strain K84 / ATCC BAA-868) (Agrobacterium radiobacter) protein is ATP-dependent protease ATPase subunit HslU.